We begin with the raw amino-acid sequence, 41 residues long: trp operon leader peptide (41 aa).

Its function is as follows. This protein is involved in control of the biosynthesis of tryptophan. This Vibrio parahaemolyticus serotype O3:K6 (strain RIMD 2210633) protein is trp operon leader peptide (trpL).